The chain runs to 90 residues: Caspase recruitment domain-containing protein 18 (90 aa).

A CARD domain is found at 1-90; that stretch reads MADQLLRKKR…PQLASKMGLH (90 aa).

As to quaternary structure, interacts with pro-CASP1. Interacts with CARD8. As to expression, primarily expressed in the heart and placenta.

Functionally, inhibits generation of IL-1-beta by interacting with caspase-1 and preventing its association with RIP2. Down-regulates the release of IL1B. The chain is Caspase recruitment domain-containing protein 18 (CARD18) from Homo sapiens (Human).